We begin with the raw amino-acid sequence, 27 residues long: Flagellar filament 34 kDa core protein (27 aa).

It belongs to the bacterial flagellin family. The flagellum consists of an outer layer composed of repeating units of FlaA around a core that contains one or all of five antigenically related polypeptides.

Its subcellular location is the periplasmic flagellum. It localises to the periplasm. Component of the core of the flagella. The polypeptide is Flagellar filament 34 kDa core protein (Spirochaeta aurantia).